The primary structure comprises 475 residues: Ribulose bisphosphate carboxylase large chain (475 aa).

Residues Met-1 to Ser-2 constitute a propeptide that is removed on maturation. At Pro-3 the chain carries N-acetylproline. Position 14 is an N6,N6,N6-trimethyllysine (Lys-14). Asn-123 and Thr-173 together coordinate substrate. Lys-175 functions as the Proton acceptor in the catalytic mechanism. A substrate-binding site is contributed by Lys-177. Lys-201, Asp-203, and Glu-204 together coordinate Mg(2+). Lys-201 is modified (N6-carboxylysine). Catalysis depends on His-294, which acts as the Proton acceptor. Arg-295, His-327, and Ser-379 together coordinate substrate.

It belongs to the RuBisCO large chain family. Type I subfamily. As to quaternary structure, heterohexadecamer of 8 large chains and 8 small chains. Mg(2+) is required as a cofactor.

It is found in the plastid. The catalysed reaction is 2 (2R)-3-phosphoglycerate + 2 H(+) = D-ribulose 1,5-bisphosphate + CO2 + H2O. It carries out the reaction D-ribulose 1,5-bisphosphate + O2 = 2-phosphoglycolate + (2R)-3-phosphoglycerate + 2 H(+). Functionally, ruBisCO catalyzes two reactions: the carboxylation of D-ribulose 1,5-bisphosphate, the primary event in carbon dioxide fixation, as well as the oxidative fragmentation of the pentose substrate in the photorespiration process. Both reactions occur simultaneously and in competition at the same active site. This Aneura mirabilis (Parasitic liverwort) protein is Ribulose bisphosphate carboxylase large chain.